The following is a 460-amino-acid chain: Cysteine--tRNA ligase (460 aa).

C28 is a Zn(2+) binding site. Positions 30–40 match the 'HIGH' region motif; that stretch reads MTVYDYCHLGH. 3 residues coordinate Zn(2+): C209, H234, and E238. Residues 266-270 carry the 'KMSKS' region motif; the sequence is KMSKS. K269 lines the ATP pocket.

This sequence belongs to the class-I aminoacyl-tRNA synthetase family. Monomer. It depends on Zn(2+) as a cofactor.

The protein resides in the cytoplasm. The catalysed reaction is tRNA(Cys) + L-cysteine + ATP = L-cysteinyl-tRNA(Cys) + AMP + diphosphate. The polypeptide is Cysteine--tRNA ligase (Pseudomonas aeruginosa (strain LESB58)).